Here is a 310-residue protein sequence, read N- to C-terminus: Putative methyltransferase mtx subunit H (310 aa).

This sequence belongs to the MtrH family. In terms of assembly, may be part of a complex composed of 3 subunits; MtxA, MtxH and MtxX.

This Methanosarcina barkeri (strain Fusaro / DSM 804) protein is Putative methyltransferase mtx subunit H (mtxH).